Consider the following 62-residue polypeptide: Large ribosomal subunit protein bL28 (62 aa).

The protein belongs to the bacterial ribosomal protein bL28 family.

In Ruminiclostridium cellulolyticum (strain ATCC 35319 / DSM 5812 / JCM 6584 / H10) (Clostridium cellulolyticum), this protein is Large ribosomal subunit protein bL28.